The primary structure comprises 98 residues: NADH-ubiquinone oxidoreductase chain 4L (98 aa).

3 consecutive transmembrane segments (helical) span residues 1–21 (MSMV…GLLM), 29–49 (SLLC…MTIL), and 61–81 (IILL…LVMV).

Belongs to the complex I subunit 4L family. Core subunit of respiratory chain NADH dehydrogenase (Complex I) which is composed of 45 different subunits.

Its subcellular location is the mitochondrion inner membrane. It catalyses the reaction a ubiquinone + NADH + 5 H(+)(in) = a ubiquinol + NAD(+) + 4 H(+)(out). Its function is as follows. Core subunit of the mitochondrial membrane respiratory chain NADH dehydrogenase (Complex I) which catalyzes electron transfer from NADH through the respiratory chain, using ubiquinone as an electron acceptor. Part of the enzyme membrane arm which is embedded in the lipid bilayer and involved in proton translocation. This is NADH-ubiquinone oxidoreductase chain 4L (MT-ND4L) from Phocarctos hookeri (Hooker's sea lion).